Here is a 90-residue protein sequence, read N- to C-terminus: Probable Fe(2+)-trafficking protein (90 aa).

Belongs to the Fe(2+)-trafficking protein family.

Functionally, could be a mediator in iron transactions between iron acquisition and iron-requiring processes, such as synthesis and/or repair of Fe-S clusters in biosynthetic enzymes. This Chromobacterium violaceum (strain ATCC 12472 / DSM 30191 / JCM 1249 / CCUG 213 / NBRC 12614 / NCIMB 9131 / NCTC 9757 / MK) protein is Probable Fe(2+)-trafficking protein.